Consider the following 367-residue polypeptide: Peptide chain release factor 2 (367 aa).

An N5-methylglutamine modification is found at Q250.

The protein belongs to the prokaryotic/mitochondrial release factor family. In terms of processing, methylated by PrmC. Methylation increases the termination efficiency of RF2.

It is found in the cytoplasm. Its function is as follows. Peptide chain release factor 2 directs the termination of translation in response to the peptide chain termination codons UGA and UAA. The sequence is that of Peptide chain release factor 2 from Kineococcus radiotolerans (strain ATCC BAA-149 / DSM 14245 / SRS30216).